A 130-amino-acid polypeptide reads, in one-letter code: D-ribose pyranase (130 aa).

His20 acts as the Proton donor in catalysis. Substrate contacts are provided by residues Asp28, His97, and 119–121 (YAN).

This sequence belongs to the RbsD / FucU family. RbsD subfamily. As to quaternary structure, homodecamer.

Its subcellular location is the cytoplasm. It carries out the reaction beta-D-ribopyranose = beta-D-ribofuranose. It participates in carbohydrate metabolism; D-ribose degradation; D-ribose 5-phosphate from beta-D-ribopyranose: step 1/2. In terms of biological role, catalyzes the interconversion of beta-pyran and beta-furan forms of D-ribose. In Paracidovorax citrulli (strain AAC00-1) (Acidovorax citrulli), this protein is D-ribose pyranase.